We begin with the raw amino-acid sequence, 265 residues long: Flap endonuclease Xni (265 aa).

Residue aspartate 111 coordinates Mg(2+). A 5'-3' exonuclease domain is found at 167-260 (VVPAQLVDFW…NLREIRYPPA (94 aa)). Residues leucine 178, valine 189, and isoleucine 192 each coordinate K(+). Positions 191–196 (GIGPKT) are interaction with DNA.

It belongs to the Xni family. Requires Mg(2+) as cofactor. K(+) is required as a cofactor.

Functionally, has flap endonuclease activity. During DNA replication, flap endonucleases cleave the 5'-overhanging flap structure that is generated by displacement synthesis when DNA polymerase encounters the 5'-end of a downstream Okazaki fragment. This chain is Flap endonuclease Xni, found in Aeromonas salmonicida (strain A449).